A 295-amino-acid chain; its full sequence is Small ribosomal subunit protein uS2 (295 aa).

The tract at residues 260–295 is disordered; sequence KQAKKFSKTKNIDEETNTEFEQALNDADENKNSDNA.

It belongs to the universal ribosomal protein uS2 family.

The chain is Small ribosomal subunit protein uS2 from Rickettsia felis (strain ATCC VR-1525 / URRWXCal2) (Rickettsia azadi).